A 99-amino-acid polypeptide reads, in one-letter code: MMMNAFFPAMALMVLVGCSTPSPVQKAQRVKVDPLRSLNMEALCKDQAAKRYNTGEQKIDVTAFEQFQGSYEMRGYTFRKEQFVCSFDADGHFLHLSMR.

Residues 1-17 (MMMNAFFPAMALMVLVG) form the signal peptide. C18 carries the N-palmitoyl cysteine lipid modification. C18 is lipidated: S-diacylglycerol cysteine.

It is found in the cell membrane. This is an uncharacterized protein from Shigella boydii serotype 4 (strain Sb227).